We begin with the raw amino-acid sequence, 129 residues long: Small ribosomal subunit protein uS11 (129 aa).

Belongs to the universal ribosomal protein uS11 family. As to quaternary structure, part of the 30S ribosomal subunit. Interacts with proteins S7 and S18. Binds to IF-3.

Its function is as follows. Located on the platform of the 30S subunit, it bridges several disparate RNA helices of the 16S rRNA. Forms part of the Shine-Dalgarno cleft in the 70S ribosome. The polypeptide is Small ribosomal subunit protein uS11 (Pectobacterium atrosepticum (strain SCRI 1043 / ATCC BAA-672) (Erwinia carotovora subsp. atroseptica)).